The following is a 139-amino-acid chain: MLSPKKTKFRKQHRGRMKGSASKGNTIAFGDYALQATEPVWLTSRQIEATRRTITRYVRRGGKLWIRVFPDKPVTARPAETRMGSGKGAPEYWVAVIKPGHILFEITGVPQKTAQQAMKLASYKLPIKTKFIVRNTIES.

Basic residues predominate over residues 1-17 (MLSPKKTKFRKQHRGRM). The interval 1–23 (MLSPKKTKFRKQHRGRMKGSASK) is disordered.

It belongs to the universal ribosomal protein uL16 family. Part of the 50S ribosomal subunit.

It is found in the plastid. The protein localises to the chloroplast. This is Large ribosomal subunit protein uL16c from Porphyra purpurea (Red seaweed).